Reading from the N-terminus, the 748-residue chain is Sulfhydryl oxidase 1 (748 aa).

The N-terminal stretch at 1-32 (MRRCGRLSGPPSLLLLLLLLSPLLFSGPGAYA) is a signal peptide. Residues 33-159 (ARLSVLYSSS…RMRLIDALES (127 aa)) form the Thioredoxin domain. Residues C73 and C76 each act as nucleophile in the active site. Disulfide bonds link C73-C76 and C104-C113. 2 N-linked (GlcNAc...) asparagine glycosylation sites follow: N133 and N246. C396 and C408 are disulfide-bonded. One can recognise an ERV/ALR sulfhydryl oxidase domain in the interval 399 to 506 (SEPHFRGFPC…EDPHFPKVQW (108 aa)). Residues R404, W411, H415, D454, H458, 481 to 488 (WTSHNRVN), K503, and W506 each bind FAD. A disulfide bridge connects residues C452 and C455. Cysteines 512 and 515 form a disulfide. The segment at 581 to 647 (GHEQAASAES…QENAPGQQHL (67 aa)) is disordered. A compositionally biased stretch (basic and acidic residues) spans 628–638 (ERMEDHQRDMQ). The helical transmembrane segment at 711 to 731 (ISLCVGLYSVSFMGLLAMYTY) threads the bilayer.

It belongs to the quiescin-sulfhydryl oxidase (QSOX) family. Monomer. It depends on FAD as a cofactor. Post-translationally, N-glycosylated. O-glycosylated on Thr and Ser residues. As to expression, detected in skin (at protein level). Expressed in the seminal vesicles and skin.

The protein localises to the golgi apparatus membrane. Its subcellular location is the secreted. It catalyses the reaction 2 R'C(R)SH + O2 = R'C(R)S-S(R)CR' + H2O2. Its function is as follows. Catalyzes the oxidation of sulfhydryl groups in peptide and protein thiols to disulfides with the reduction of oxygen to hydrogen peroxide. Plays a role in disulfide bond formation in a variety of extracellular proteins. In fibroblasts, required for normal incorporation of laminin into the extracellular matrix, and thereby for normal cell-cell adhesion and cell migration. This chain is Sulfhydryl oxidase 1 (Qsox1), found in Mus musculus (Mouse).